The sequence spans 528 residues: GMP synthase [glutamine-hydrolyzing] (528 aa).

The Glutamine amidotransferase type-1 domain occupies 13-203 (TVLVVDFGAQ…LYEAAGCRPT (191 aa)). C90 (nucleophile) is an active-site residue. Active-site residues include H177 and E179. One can recognise a GMPS ATP-PPase domain in the interval 204–402 (WTMVNIVEDQ…LGLPAEMVWR (199 aa)). 231 to 237 (SGGVDSA) contributes to the ATP binding site.

In terms of assembly, homodimer.

It carries out the reaction XMP + L-glutamine + ATP + H2O = GMP + L-glutamate + AMP + diphosphate + 2 H(+). The protein operates within purine metabolism; GMP biosynthesis; GMP from XMP (L-Gln route): step 1/1. In terms of biological role, catalyzes the synthesis of GMP from XMP. The polypeptide is GMP synthase [glutamine-hydrolyzing] (Thermobifida fusca (strain YX)).